The chain runs to 238 residues: Small ribosomal subunit protein uS2 (238 aa).

It belongs to the universal ribosomal protein uS2 family.

This Actinobacillus pleuropneumoniae serotype 7 (strain AP76) protein is Small ribosomal subunit protein uS2.